Consider the following 277-residue polypeptide: MSFKKILGVALVSALALTACKEEKKAESTAAPAAQAPAKIKVGVMSGPEHTVAERAAQIAKEKYGLEVEFVLFNDYALPNTAVSKGDLDANAFQHKPYLDKDSQSKGLNNLVIVGNTFVYPLAGYSKKVKNVSELAEGAVIAVPNDPSNLARALILLEKQGLIKLKDNTNLFSTSVDIIENPKNLKIKEVDTSIAAKALDDVDLAVVNNTYAGQVGLNTQDHGVFVESKDSPYVNIIVARQDNKDAANVQNFIKSYQTEEVYQEAQKHFKDGVVKGW.

Residues 1 to 19 form the signal peptide; the sequence is MSFKKILGVALVSALALTA. Cys-20 is lipidated: N-palmitoyl cysteine. Cys-20 carries the S-diacylglycerol cysteine lipid modification.

This sequence belongs to the NlpA lipoprotein family.

Its subcellular location is the cell outer membrane. This is Outer membrane lipoprotein 1 (plpA) from Mannheimia haemolytica (Pasteurella haemolytica).